We begin with the raw amino-acid sequence, 161 residues long: UPF0178 protein BruAb1_1955 (161 aa).

The protein belongs to the UPF0178 family.

The protein is UPF0178 protein BruAb1_1955 of Brucella abortus biovar 1 (strain 9-941).